The primary structure comprises 389 residues: Phosphopentomutase (389 aa).

Mn(2+) contacts are provided by aspartate 12, aspartate 284, histidine 289, aspartate 325, histidine 326, and histidine 337.

It belongs to the phosphopentomutase family. Mn(2+) is required as a cofactor.

The protein resides in the cytoplasm. It carries out the reaction 2-deoxy-alpha-D-ribose 1-phosphate = 2-deoxy-D-ribose 5-phosphate. The catalysed reaction is alpha-D-ribose 1-phosphate = D-ribose 5-phosphate. Its pathway is carbohydrate degradation; 2-deoxy-D-ribose 1-phosphate degradation; D-glyceraldehyde 3-phosphate and acetaldehyde from 2-deoxy-alpha-D-ribose 1-phosphate: step 1/2. In terms of biological role, isomerase that catalyzes the conversion of deoxy-ribose 1-phosphate (dRib-1-P) and ribose 1-phosphate (Rib-1-P) to deoxy-ribose 5-phosphate (dRib-5-P) and ribose 5-phosphate (Rib-5-P), respectively. The protein is Phosphopentomutase of Anaeromyxobacter sp. (strain Fw109-5).